The sequence spans 118 residues: Large ribosomal subunit protein uL18 (118 aa).

It belongs to the universal ribosomal protein uL18 family. As to quaternary structure, part of the 50S ribosomal subunit; part of the 5S rRNA/L5/L18/L25 subcomplex. Contacts the 5S and 23S rRNAs.

This is one of the proteins that bind and probably mediate the attachment of the 5S RNA into the large ribosomal subunit, where it forms part of the central protuberance. The protein is Large ribosomal subunit protein uL18 of Nitrosospira multiformis (strain ATCC 25196 / NCIMB 11849 / C 71).